Consider the following 302-residue polypeptide: uncharacterized protein (302 aa).

3 disordered regions span residues 81-100, 155-209, and 269-302; these read ETSD…ERAA, TVTG…PVNP, and LRIE…ALLN. The segment covering 196–209 has biased composition (low complexity); that stretch reads PSLPSSLVSSPVNP.

This is an uncharacterized protein from Ictalurid herpesvirus 1 (strain Auburn) (IcHV-1).